The following is a 392-amino-acid chain: Odorant receptor 85f (392 aa).

Residues 1–36 (MEPVQYSYEDFARLPTTVFWIMGYDMLGVPKTRSRR) are Cytoplasmic-facing. The chain crosses the membrane as a helical span at residues 37-57 (ILYWIYRFLCLASHGVCVGVM). At 58–69 (VFRMVEAKTIDN) the chain is on the extracellular side. Residue N69 is glycosylated (N-linked (GlcNAc...) asparagine). Residues 70 to 90 (VSLIMRYATLVTYIINSDTKF) traverse the membrane as a helical segment. Topologically, residues 91–130 (ATVLQRSAIQSLNSKLAELYPKTTLDRIYHRVNDHYWTKS) are cytoplasmic. The helical transmembrane segment at 131–151 (FVYLVIIYIGSSIMVVIGPII) threads the bilayer. Residues 152–179 (TSIIAYFTHNVFTYMHCYPYFLYDPEKD) lie on the Extracellular side of the membrane. A helical transmembrane segment spans residues 180–200 (PVWIYISIYALEWLHSTQMVI). Residues 201-268 (SNIGADIWLL…NDLNGIFGKS (68 aa)) lie on the Cytoplasmic side of the membrane. A helical membrane pass occupies residues 269 to 289 (LLLSLLTTAAVICTVAVYTLI). Over 290–295 (QGPTLE) the chain is Extracellular. A helical membrane pass occupies residues 296–316 (GFTYVIFIGTSVMQVYLVCYY). Over 317–363 (GQQVLDLSGEVAHAVYNHDFHDASIAYKRYLLIIIIRAQQPVELNAM) the chain is Cytoplasmic. A helical membrane pass occupies residues 364–384 (GYLSISLDTFKQLMSVSYRVI). The Extracellular portion of the chain corresponds to 385–392 (TMLMQMIQ).

It belongs to the insect chemoreceptor superfamily. Heteromeric odorant receptor channel (TC 1.A.69) family. Or49a subfamily. As to quaternary structure, interacts with Orco. Complexes exist early in the endomembrane system in olfactory sensory neurons (OSNs), coupling these complexes to the conserved ciliary trafficking pathway. In terms of tissue distribution, expressed in olfactory sensory neurons in the antenna.

The protein resides in the cell membrane. Functionally, odorant receptor which mediates acceptance or avoidance behavior, depending on its substrates. The odorant receptor repertoire encodes a large collection of odor stimuli that vary widely in identity, intensity, and duration. May form a complex with Orco to form odorant-sensing units, providing sensitive and prolonged odorant signaling and calcium permeability. The chain is Odorant receptor 85f (Or85f) from Drosophila melanogaster (Fruit fly).